A 166-amino-acid polypeptide reads, in one-letter code: UPF0304 protein VC_1871 (166 aa).

Belongs to the UPF0304 family.

The chain is UPF0304 protein VC_1871 from Vibrio cholerae serotype O1 (strain ATCC 39315 / El Tor Inaba N16961).